The primary structure comprises 545 residues: Esterase-5C (545 aa).

The signal sequence occupies residues 1–19 (MLAARLIILLSFYWLSASA). Cysteines 84 and 103 form a disulfide. N-linked (GlcNAc...) asparagine glycosylation is present at N113. Catalysis depends on S207, which acts as the Acyl-ester intermediate. C259 and C271 are oxidised to a cystine. A glycan (N-linked (GlcNAc...) asparagine) is linked at N421. The Charge relay system role is filled by H467. The N-linked (GlcNAc...) asparagine glycan is linked to N507. Residues C515 and C536 are joined by a disulfide bond.

The protein belongs to the type-B carboxylesterase/lipase family.

It is found in the secreted. The catalysed reaction is a carboxylic ester + H2O = an alcohol + a carboxylate + H(+). The polypeptide is Esterase-5C (Est-5C) (Drosophila persimilis (Fruit fly)).